The sequence spans 276 residues: NH(3)-dependent NAD(+) synthetase (276 aa).

43–50 (GISGGVDS) is an ATP binding site. Asp-49 lines the Mg(2+) pocket. Arg-146 is a deamido-NAD(+) binding site. An ATP-binding site is contributed by Thr-166. Glu-171 provides a ligand contact to Mg(2+). Residues Lys-179 and Asp-186 each coordinate deamido-NAD(+). Positions 195 and 217 each coordinate ATP. Residue 266-267 (HK) participates in deamido-NAD(+) binding.

The protein belongs to the NAD synthetase family. Homodimer.

The catalysed reaction is deamido-NAD(+) + NH4(+) + ATP = AMP + diphosphate + NAD(+) + H(+). The protein operates within cofactor biosynthesis; NAD(+) biosynthesis; NAD(+) from deamido-NAD(+) (ammonia route): step 1/1. Catalyzes the ATP-dependent amidation of deamido-NAD to form NAD. Uses ammonia as a nitrogen source. In Shewanella woodyi (strain ATCC 51908 / MS32), this protein is NH(3)-dependent NAD(+) synthetase.